Reading from the N-terminus, the 377-residue chain is Ribosomal RNA large subunit methyltransferase G (377 aa).

This sequence belongs to the methyltransferase superfamily. RlmG family.

Its subcellular location is the cytoplasm. It carries out the reaction guanosine(1835) in 23S rRNA + S-adenosyl-L-methionine = N(2)-methylguanosine(1835) in 23S rRNA + S-adenosyl-L-homocysteine + H(+). Specifically methylates the guanine in position 1835 (m2G1835) of 23S rRNA. This Aeromonas salmonicida (strain A449) protein is Ribosomal RNA large subunit methyltransferase G.